We begin with the raw amino-acid sequence, 680 residues long: Dihydroxyacetone phosphate acyltransferase (680 aa).

Phosphoserine occurs at positions 12 and 17. The short motif at 162–167 (HRSYID) is the HXXXXD motif element. At K643 the chain carries N6-acetyllysine. A Microbody targeting signal motif is present at residues 678 to 680 (AKL).

It belongs to the GPAT/DAPAT family. Part of a heterotrimeric complex composed of GNPAT, AGPS and a modified form of GNPAT.

The protein resides in the peroxisome membrane. It carries out the reaction dihydroxyacetone phosphate + an acyl-CoA = a 1-acylglycerone 3-phosphate + CoA. The enzyme catalyses dihydroxyacetone phosphate + hexadecanoyl-CoA = 1-hexadecanoylglycerone 3-phosphate + CoA. It functions in the pathway membrane lipid metabolism; glycerophospholipid metabolism. In terms of biological role, dihydroxyacetonephosphate acyltransferase catalyzing the first step in the biosynthesis of plasmalogens, a subset of phospholipids that differ from other glycerolipids by having an alkyl chain attached through a vinyl ether linkage at the sn-1 position of the glycerol backbone, and which unique physical properties have an impact on various aspects of cell signaling and membrane biology. The polypeptide is Dihydroxyacetone phosphate acyltransferase (Bos taurus (Bovine)).